The chain runs to 429 residues: Histidine--tRNA ligase (429 aa).

It belongs to the class-II aminoacyl-tRNA synthetase family. As to quaternary structure, homodimer.

It localises to the cytoplasm. The catalysed reaction is tRNA(His) + L-histidine + ATP = L-histidyl-tRNA(His) + AMP + diphosphate + H(+). In Oceanobacillus iheyensis (strain DSM 14371 / CIP 107618 / JCM 11309 / KCTC 3954 / HTE831), this protein is Histidine--tRNA ligase.